The chain runs to 176 residues: RNA pyrophosphohydrolase (176 aa).

One can recognise a Nudix hydrolase domain in the interval 6–149 (GYRPNVGIVI…KRDVYRRVMK (144 aa)). Positions 38–59 (GGINPGESAEQAMYRELFEEVG) match the Nudix box motif.

The protein belongs to the Nudix hydrolase family. RppH subfamily. A divalent metal cation serves as cofactor.

Its function is as follows. Accelerates the degradation of transcripts by removing pyrophosphate from the 5'-end of triphosphorylated RNA, leading to a more labile monophosphorylated state that can stimulate subsequent ribonuclease cleavage. This chain is RNA pyrophosphohydrolase, found in Shigella dysenteriae serotype 1 (strain Sd197).